The following is a 635-amino-acid chain: Threonine--tRNA ligase (635 aa).

Positions 1 to 61 (MINISFPDGS…EHDCKLRILT (61 aa)) constitute a TGS domain. Residues 242 to 533 (DHRKIGKELD…LIEEYAGKFP (292 aa)) form a catalytic region. C333, H384, and H510 together coordinate Zn(2+).

This sequence belongs to the class-II aminoacyl-tRNA synthetase family. Homodimer. It depends on Zn(2+) as a cofactor.

It is found in the cytoplasm. It catalyses the reaction tRNA(Thr) + L-threonine + ATP = L-threonyl-tRNA(Thr) + AMP + diphosphate + H(+). In terms of biological role, catalyzes the attachment of threonine to tRNA(Thr) in a two-step reaction: L-threonine is first activated by ATP to form Thr-AMP and then transferred to the acceptor end of tRNA(Thr). Also edits incorrectly charged L-seryl-tRNA(Thr). The sequence is that of Threonine--tRNA ligase from Rickettsia typhi (strain ATCC VR-144 / Wilmington).